The following is a 191-amino-acid chain: MEEKVESTTTPDGPCVVSVQETEKWMEEAMRMAKEALENIEVPVGCLMVYNNEVVGKGRNEVNQTKNATRHAEMVAIDQVLDWCHQHGQSPSTVFEHTVLYVTVEPCIMCAAALRLMKIPLVVYGCQNERFGGCGSVLNIASADLPNTGRPFQCIPGYRAEEAVELLKTFYKQENPNAPKSKVRKKDCQKS.

Positions 20-145 (QETEKWMEEA…SVLNIASADL (126 aa)) constitute a CMP/dCMP-type deaminase domain. His71 provides a ligand contact to Zn(2+). Glu73 (proton donor) is an active-site residue. 2 residues coordinate Zn(2+): Cys107 and Cys110.

Belongs to the cytidine and deoxycytidylate deaminase family. ADAT2 subfamily. Requires Zn(2+) as cofactor.

The enzyme catalyses adenosine(34) in tRNA + H2O + H(+) = inosine(34) in tRNA + NH4(+). In terms of biological role, probably participates in deamination of adenosine-34 to inosine in many tRNAs. This chain is tRNA-specific adenosine deaminase 2 (Adat2), found in Mus musculus (Mouse).